A 401-amino-acid chain; its full sequence is Ribosomal RNA large subunit methyltransferase G (401 aa).

The protein belongs to the methyltransferase superfamily. RlmG family.

It localises to the cytoplasm. The catalysed reaction is guanosine(1835) in 23S rRNA + S-adenosyl-L-methionine = N(2)-methylguanosine(1835) in 23S rRNA + S-adenosyl-L-homocysteine + H(+). Specifically methylates the guanine in position 1835 (m2G1835) of 23S rRNA. The polypeptide is Ribosomal RNA large subunit methyltransferase G (Shewanella loihica (strain ATCC BAA-1088 / PV-4)).